A 338-amino-acid chain; its full sequence is Fructose-1,6-bisphosphatase 1 (338 aa).

Threonine 2 is subject to N-acetylthreonine. Residues 18–22 and 28–32 each bind AMP; these read VMEEG and TGEMT. Residues aspartate 69 and glutamate 98 each contribute to the Mg(2+) site. Residue 113-114 coordinates AMP; sequence KY. Aspartate 119, leucine 121, and aspartate 122 together coordinate Mg(2+). Residue 122–125 coordinates substrate; sequence DGSS. Residue lysine 141 coordinates AMP. Position 151 is an N6-succinyllysine (lysine 151). Serine 208 bears the Phosphoserine mark. Residues 213–216, 244–249, tyrosine 265, and 275–277 each bind substrate; these read NEGY, RYVGSM, and KLR. 3 positions are modified to phosphotyrosine: tyrosine 216, tyrosine 245, and tyrosine 265. Residue glutamate 281 participates in Mg(2+) binding.

The protein belongs to the FBPase class 1 family. As to quaternary structure, homotetramer. Requires Mg(2+) as cofactor.

It catalyses the reaction beta-D-fructose 1,6-bisphosphate + H2O = beta-D-fructose 6-phosphate + phosphate. Its pathway is carbohydrate biosynthesis; gluconeogenesis. With respect to regulation, subject to complex allosteric regulation. The enzyme can assume an active R-state, or an inactive T-state. Intermediate conformations may exist. AMP acts as an allosteric inhibitor. AMP binding affects the turnover of bound substrate and not the affinity for substrate. Fructose 2,6-bisphosphate acts as a competitive inhibitor. Fructose 2,6-bisphosphate and AMP have synergistic effects. Catalyzes the hydrolysis of fructose 1,6-bisphosphate to fructose 6-phosphate in the presence of divalent cations, acting as a rate-limiting enzyme in gluconeogenesis. Plays a role in regulating glucose sensing and insulin secretion of pancreatic beta-cells. Appears to modulate glycerol gluconeogenesis in liver. Important regulator of appetite and adiposity; increased expression of the protein in liver after nutrient excess increases circulating satiety hormones and reduces appetite-stimulating neuropeptides and thus seems to provide a feedback mechanism to limit weight gain. The protein is Fructose-1,6-bisphosphatase 1 (FBP1) of Bos taurus (Bovine).